Here is a 634-residue protein sequence, read N- to C-terminus: Putative ABC transporter ATP-binding protein MG015 homolog (634 aa).

6 helical membrane-spanning segments follow: residues 54-74, 111-131, 189-209, 213-233, 296-316, and 325-345; these read VLYV…NSIL, LTIV…FNVA, VGGQ…ILFV, VIAL…FLFL, VFIY…SISI, and IPSF…IAAL. An ABC transmembrane type-1 domain is found at 54 to 364; it reads VLYVMVCAIF…IFSLWNLIQL (311 aa). The 235-residue stretch at 397 to 631 folds into the ABC transporter domain; it reads IRFEKVVFGY…NGFYARLKRS (235 aa). Position 430–437 (430–437) interacts with ATP; the sequence is GPTGAGKS.

The protein belongs to the ABC transporter superfamily.

Its subcellular location is the cell membrane. The chain is Putative ABC transporter ATP-binding protein MG015 homolog from Mycoplasma pneumoniae (strain ATCC 29342 / M129 / Subtype 1) (Mycoplasmoides pneumoniae).